The chain runs to 822 residues: Lysine-specific histone demethylase 2 (822 aa).

The segment covering 1-11 (MATPRGRTKKK) has biased composition (basic residues). The interval 1–47 (MATPRGRTKKKASFDHSPDSLPLRSSGRQAKKKATETTDEDEDGGSE) is disordered. Residues serine 13, serine 17, and serine 26 each carry the phosphoserine modification. Zn(2+) is bound by residues cysteine 53, cysteine 58, cysteine 65, cysteine 73, histidine 84, histidine 90, cysteine 92, cysteine 95, cysteine 142, cysteine 147, cysteine 169, and cysteine 185. A CW-type zinc finger spans residues 133-193 (DQQLPYWVQC…HCSLPEDLRV (61 aa)). Serine 247 is modified (phosphoserine). Residues 273–292 (YQPNECGKALCVRPDVMELD) are GLYR1-binding. The 99-residue stretch at 275-373 (PNECGKALCV…TGVLSVGADQ (99 aa)) folds into the SWIRM domain. 383-439 (KSVIIIGAGPAGLAAARQLHNFGIKVTVLEAKDRIGGRVWDDKSFKGVTVGRGAQIV) contributes to the FAD binding site. Histone H3-binding regions lie at residues 438 to 467 (IVNG…RCDL), 487 to 498 (FNALLDVVSEWR), and 538 to 572 (FHLS…AGDH). The tract at residues 564–566 (FFA) is GLYR1-binding. Residues valine 598, glutamate 795, and 803–805 (QTV) contribute to the FAD site. Residues 798–814 (NRHFPQTVTGAYLSGVR) form a GLYR1-binding region.

It belongs to the flavin monoamine oxidase family. In terms of assembly, interacts with its cofactor GLYR1 at nucleosomes; this interaction stimulates H3K4me1 and H3K4me2 demethylation. In contrast to KDM1A, does not form a complex with RCOR1/CoREST. Possible accessory component of the polycomb repressive deubiquitinase (PR-DUB) complex, at least composed of BAP1, one of ASXL1, ASXL2 or (probably) ASXL3 and one of MBD5 or MBD6. The PR-DUB core associates with a number of accessory proteins, including FOXK1, FOXK2, KDM1B, HCFC1 and OGT; KDM1B specifically associates with ASXL2 PR-DUB complexes. FAD serves as cofactor. Requires Zn(2+) as cofactor.

It localises to the nucleus. The protein resides in the chromosome. It carries out the reaction N(6),N(6)-dimethyl-L-lysyl(4)-[histone H3] + 2 A + 2 H2O = L-lysyl(4)-[histone H3] + 2 formaldehyde + 2 AH2. The catalysed reaction is N(6)-methyl-L-lysyl(4)-[histone H3] + A + H2O = L-lysyl(4)-[histone H3] + formaldehyde + AH2. Histone H3K4me1 and H3K4me2 demethylase activity is inhibited by DNA, this inhibition is released in complex with GLYR1. Histone demethylase that demethylates 'Lys-4' of histone H3, a specific tag for epigenetic transcriptional activation, thereby acting as a corepressor. Required for de novo DNA methylation of a subset of imprinted genes during oogenesis. Acts by oxidizing the substrate by FAD to generate the corresponding imine that is subsequently hydrolyzed. Demethylates both mono- and di-methylated 'Lys-4' of histone H3. Has no effect on tri-methylated 'Lys-4', mono-, di- or tri-methylated 'Lys-9', mono-, di- or tri-methylated 'Lys-27', mono-, di- or tri-methylated 'Lys-36' of histone H3, or on mono-, di- or tri-methylated 'Lys-20' of histone H4. Alone, it is unable to demethylate H3K4me on nucleosomes and requires the presence of GLYR1 to achieve such activity, they form a multifunctional enzyme complex that modifies transcribed chromatin and facilitates Pol II transcription through nucleosomes. The protein is Lysine-specific histone demethylase 2 of Homo sapiens (Human).